Reading from the N-terminus, the 286-residue chain is Protease HtpX homolog (286 aa).

Helical transmembrane passes span 7–27 (TFMLMAAITALFIVIGGMIGG) and 29–49 (SGMMLALLFALGMNFFSYWFS). Residue His-131 participates in Zn(2+) binding. The active site involves Glu-132. Position 135 (His-135) interacts with Zn(2+). 2 helical membrane passes run 146 to 166 (ISATMAGAISALANFAVFFGG) and 177 to 197 (IAGIAVAILAPLAAAMIQMAI). Glu-202 is a Zn(2+) binding site.

Belongs to the peptidase M48B family. The cofactor is Zn(2+).

The protein localises to the cell inner membrane. The protein is Protease HtpX homolog of Ralstonia pickettii (strain 12J).